We begin with the raw amino-acid sequence, 992 residues long: Vacuolar membrane protease (992 aa).

The Cytoplasmic portion of the chain corresponds to 1 to 24 (MSPAMANPRVRKFNPIAFTPLPVT). A helical membrane pass occupies residues 25–45 (FITTIVYLAVLILVLVTYLVV). Topologically, residues 46-390 (PPAPTLEMSP…SAFAVFRLHT (345 aa)) are vacuolar. N-linked (GlcNAc...) asparagine glycosylation is found at Asn59, Asn115, and Asn118. Zn(2+) contacts are provided by His174 and Asp186. Glu220 acts as the Proton acceptor in catalysis. Glu221 contacts Zn(2+). Asn237 carries an N-linked (GlcNAc...) asparagine glycan. Zn(2+) is bound by residues Glu246 and His319. Residues 391–411 (LFALSVTLLVIGPLVLFITSI) form a helical membrane-spanning segment. At 412 to 446 (ALSKTDRMYLFSMSKSLGGASETVSLRGLRGLFRT) the chain is on the cytoplasmic side. A helical membrane pass occupies residues 447–467 (PIILTVTTVISIGLAYLLEKI). Topologically, residues 468–474 (NPYIVHS) are vacuolar. The chain crosses the membrane as a helical span at residues 475–495 (SQFAVWSMMLSVWIFVAWFLA). At 496 to 508 (RVADFFRPSALHR) the chain is on the cytoplasmic side. A helical transmembrane segment spans residues 509-529 (AYSYTWIFIVTWIMLVISTVY). Residues 530 to 533 (ANQK) lie on the Vacuolar side of the membrane. Residues 534–554 (GIAAGYFTFFYFAAVFLATWV) traverse the membrane as a helical segment. The Cytoplasmic segment spans residues 555–671 (SYLELFSLPR…WSWTLPRWTW (117 aa)). Residues 579–620 (RSSSLSSRLLTPSADELPSDIGPNGAENVGDPDETDPTESTS) form a disordered region. A helical transmembrane segment spans residues 672–692 (ILQLLLLAPIVIILVGQVGLL). The Vacuolar portion of the chain corresponds to 693-708 (LTTAMSQIGSDGVSTF). Residues 709–729 (IVYLACALFSTLLFAPLLPFI) form a helical membrane-spanning segment. The Cytoplasmic segment spans residues 730-736 (HRFTYHV). Residues 737–757 (PIFLLLIFIGTLIYNLVAFPF) traverse the membrane as a helical segment. Topologically, residues 758–992 (SPANRLKIFF…VEASHDFIIQ (235 aa)) are vacuolar. Residues Asn805, Asn846, and Asn954 are each glycosylated (N-linked (GlcNAc...) asparagine).

Belongs to the peptidase M28 family. The cofactor is Zn(2+).

The protein localises to the vacuole membrane. Functionally, may be involved in vacuolar sorting and osmoregulation. This Paracoccidioides brasiliensis (strain Pb18) protein is Vacuolar membrane protease.